The following is a 115-amino-acid chain: uncharacterized protein (115 aa).

The tract at residues 1–74 is disordered; the sequence is MGTGLRSQSL…VPGSLGDTEQ (74 aa).

This is an uncharacterized protein from Homo sapiens (Human).